Here is a 255-residue protein sequence, read N- to C-terminus: Probable cyclic nucleotide phosphodiesterase syc0937_d (255 aa).

Residues Asp-19, His-21, Asp-59, Asn-89, His-157, His-196, and His-198 each contribute to the Fe cation site. AMP is bound by residues His-21, Asp-59, and 89 to 90 (NH). His-198 lines the AMP pocket.

It belongs to the cyclic nucleotide phosphodiesterase class-III family. The cofactor is Fe(2+).

The polypeptide is Probable cyclic nucleotide phosphodiesterase syc0937_d (Synechococcus sp. (strain ATCC 27144 / PCC 6301 / SAUG 1402/1) (Anacystis nidulans)).